We begin with the raw amino-acid sequence, 289 residues long: Serine/threonine-protein phosphatase Pgam5, mitochondrial (289 aa).

Belongs to the phosphoglycerate mutase family. BPG-dependent PGAM subfamily. As to quaternary structure, interacts with Pk92B/ASK1.

It localises to the mitochondrion outer membrane. The enzyme catalyses O-phospho-L-seryl-[protein] + H2O = L-seryl-[protein] + phosphate. The catalysed reaction is O-phospho-L-threonyl-[protein] + H2O = L-threonyl-[protein] + phosphate. Its function is as follows. Displays phosphatase activity for serine/threonine residues, and dephosphorylates and activates Pk92B kinase. Has apparently no phosphoglycerate mutase activity. The sequence is that of Serine/threonine-protein phosphatase Pgam5, mitochondrial from Drosophila grimshawi (Hawaiian fruit fly).